A 162-amino-acid chain; its full sequence is Large ribosomal subunit protein uL10 (162 aa).

This sequence belongs to the universal ribosomal protein uL10 family. As to quaternary structure, part of the ribosomal stalk of the 50S ribosomal subunit. The N-terminus interacts with L11 and the large rRNA to form the base of the stalk. The C-terminus forms an elongated spine to which L12 dimers bind in a sequential fashion forming a multimeric L10(L12)X complex.

Forms part of the ribosomal stalk, playing a central role in the interaction of the ribosome with GTP-bound translation factors. This Borreliella burgdorferi (strain ATCC 35210 / DSM 4680 / CIP 102532 / B31) (Borrelia burgdorferi) protein is Large ribosomal subunit protein uL10 (rplJ).